An 87-amino-acid chain; its full sequence is U14-lycotoxin-Ls1a (87 aa).

The N-terminal stretch at 1–20 (MNSKVFAVLLLLALLTCVLS) is a signal peptide. The WAP domain maps to 21–66 (EKYCPTPRNTSCKKMNIRNNCCRDSDCTSNAFCCAEPCGNFCHKAS). 5 disulfide bridges follow: C24–C54, C32–C58, C41–C53, C42–C80, and C47–C62.

Belongs to the venom protein 11 family. 01 (wap-1) subfamily. In terms of processing, contains 5 disulfide bonds. Expressed by the venom gland.

It is found in the secreted. Its function is as follows. Has antibacterial activity. The sequence is that of U14-lycotoxin-Ls1a from Lycosa singoriensis (Wolf spider).